Consider the following 361-residue polypeptide: DNA polymerase IV 3 (361 aa).

One can recognise a UmuC domain in the interval 12-192 (IIHVDMDAFY…LPVNKFHGVG (181 aa)). 2 residues coordinate Mg(2+): Asp-16 and Asp-110. Glu-111 is a catalytic residue.

The protein belongs to the DNA polymerase type-Y family. Monomer. The cofactor is Mg(2+).

Its subcellular location is the cytoplasm. It catalyses the reaction DNA(n) + a 2'-deoxyribonucleoside 5'-triphosphate = DNA(n+1) + diphosphate. In terms of biological role, poorly processive, error-prone DNA polymerase involved in untargeted mutagenesis. Copies undamaged DNA at stalled replication forks, which arise in vivo from mismatched or misaligned primer ends. These misaligned primers can be extended by PolIV. Exhibits no 3'-5' exonuclease (proofreading) activity. May be involved in translesional synthesis, in conjunction with the beta clamp from PolIII. This Mesorhizobium japonicum (strain LMG 29417 / CECT 9101 / MAFF 303099) (Mesorhizobium loti (strain MAFF 303099)) protein is DNA polymerase IV 3 (dinB3).